The following is a 94-amino-acid chain: Co-chaperonin GroES (94 aa).

This sequence belongs to the GroES chaperonin family. In terms of assembly, heptamer of 7 subunits arranged in a ring. Interacts with the chaperonin GroEL.

The protein resides in the cytoplasm. Its function is as follows. Together with the chaperonin GroEL, plays an essential role in assisting protein folding. The GroEL-GroES system forms a nano-cage that allows encapsulation of the non-native substrate proteins and provides a physical environment optimized to promote and accelerate protein folding. GroES binds to the apical surface of the GroEL ring, thereby capping the opening of the GroEL channel. The polypeptide is Co-chaperonin GroES (Streptococcus pneumoniae (strain ATCC 700669 / Spain 23F-1)).